A 436-amino-acid polypeptide reads, in one-letter code: ATP-dependent protease ATPase subunit HslU (436 aa).

ATP-binding positions include I18, 60–65, D249, E314, and R386; that span reads GVGKTE.

Belongs to the ClpX chaperone family. HslU subfamily. A double ring-shaped homohexamer of HslV is capped on each side by a ring-shaped HslU homohexamer. The assembly of the HslU/HslV complex is dependent on binding of ATP.

It localises to the cytoplasm. Its function is as follows. ATPase subunit of a proteasome-like degradation complex; this subunit has chaperone activity. The binding of ATP and its subsequent hydrolysis by HslU are essential for unfolding of protein substrates subsequently hydrolyzed by HslV. HslU recognizes the N-terminal part of its protein substrates and unfolds these before they are guided to HslV for hydrolysis. This is ATP-dependent protease ATPase subunit HslU from Chelativorans sp. (strain BNC1).